A 90-amino-acid polypeptide reads, in one-letter code: Trp-8 progonadoliberin (90 aa).

The signal sequence occupies residues 1–24 (MSRHVTVVLLLAVVLLLSSHMSHG). Position 25 is a pyrrolidone carboxylic acid (Gln-25). Gly-34 carries the glycine amide modification.

The protein belongs to the GnRH family. As to expression, expressed in forebrain but not in testis, ovary, kidney and liver.

The protein resides in the secreted. Stimulates the secretion of gonadotropins. This chain is Trp-8 progonadoliberin, found in Rana dybowskii (Dybovsky's frog).